The sequence spans 506 residues: MAP kinase kinase MKK2/SSP33 (506 aa).

The segment at 1–69 is disordered; that stretch reads MASMFRPPES…TSTTSSMASN (69 aa). Polar residues predominate over residues 26–52; sequence LVQNAKSTNDGQHLNRSPYSSVNESPY. Over residues 53-69 the composition is skewed to low complexity; that stretch reads SNNSTSATSTTSSMASN. Residues 214–481 form the Protein kinase domain; it reads ITTLGILGEG…PRQMLKHPWI (268 aa). ATP is bound by residues 220-228 and Lys-243; that span reads LGEGAGGSV. The Proton acceptor role is filled by Asp-342.

Belongs to the protein kinase superfamily. STE Ser/Thr protein kinase family. MAP kinase kinase subfamily.

The catalysed reaction is L-seryl-[protein] + ATP = O-phospho-L-seryl-[protein] + ADP + H(+). It catalyses the reaction L-threonyl-[protein] + ATP = O-phospho-L-threonyl-[protein] + ADP + H(+). The enzyme catalyses L-tyrosyl-[protein] + ATP = O-phospho-L-tyrosyl-[protein] + ADP + H(+). Functionally, serine/threonine protein kinase involved in a signal transduction pathway that plays a role in yeast cell morphogenesis and cell growth. This pathway seems to start by SMP3; then involves the kinase PKC1 that may act on the BCK1 kinase that then phosphorylates MKK1 and MKK2 which themselves phosphorylate the MPK1 kinase. The chain is MAP kinase kinase MKK2/SSP33 (MKK2) from Saccharomyces cerevisiae (strain ATCC 204508 / S288c) (Baker's yeast).